Here is a 49-residue protein sequence, read N- to C-terminus: Small ribosomal subunit protein eS31 (49 aa).

Positions 21, 24, 39, and 42 each coordinate Zn(2+). The segment at 21 to 42 adopts a C4-type zinc-finger fold; it reads CPRCGPGTFLADHKNRLTCGKC.

The protein belongs to the eukaryotic ribosomal protein eS31 family. As to quaternary structure, part of the 30S ribosomal subunit. Zn(2+) is required as a cofactor.

The sequence is that of Small ribosomal subunit protein eS31 from Methanosarcina barkeri (strain Fusaro / DSM 804).